Here is a 932-residue protein sequence, read N- to C-terminus: uncharacterized protein (932 aa).

5 disordered regions span residues 26–120, 158–289, 304–617, 635–720, and 802–863; these read NINN…NMLT, MGIG…EEKK, NNNN…INHD, QQSQ…PPLV, and SVSS…FPLE. 2 stretches are compositionally biased toward low complexity: residues 41–105 and 163–241; these read NNNI…IISS and NNNN…YGNN. The segment covering 242 to 253 has biased composition (polar residues); the sequence is TPVNYIHNNSTP. The span at 265–285 shows a compositional bias: acidic residues; sequence SDEEDSVLYSSDDSEESDYEE. The span at 304–475 shows a compositional bias: low complexity; that stretch reads NNNNINNNNM…NNNNNNNNNN (172 aa). 2 stretches are compositionally biased toward polar residues: residues 476–492 and 527–540; these read ENYV…NTES and DIPN…TKQQ. The span at 548–590 shows a compositional bias: low complexity; that stretch reads SPVYSPPNNLSPLSSPYLHHNSNNNSNNGGGNSNNNNTNFNYG. Residues 606–617 show a composition bias toward basic and acidic residues; it reads GERDPPHVINHD. 3 stretches are compositionally biased toward low complexity: residues 635-666, 696-707, and 813-853; these read QQSQ…PSSS, SPPNTSISSLSS, and NSSN…NNNS. Residues 854 to 863 are compositionally biased toward basic and acidic residues; the sequence is EPKKPKFPLE.

This is an uncharacterized protein from Dictyostelium discoideum (Social amoeba).